A 177-amino-acid chain; its full sequence is Inorganic pyrophosphatase (177 aa).

Residues Lys31, Arg45, and Tyr57 each coordinate substrate. Residues Asp67, Asp72, and Asp104 each contribute to the Mg(2+) site. Tyr141 provides a ligand contact to substrate.

This sequence belongs to the PPase family. In terms of assembly, homohexamer. Mg(2+) is required as a cofactor.

It is found in the cytoplasm. The enzyme catalyses diphosphate + H2O = 2 phosphate + H(+). In terms of biological role, catalyzes the hydrolysis of inorganic pyrophosphate (PPi) forming two phosphate ions. The chain is Inorganic pyrophosphatase from Halobacterium salinarum (strain ATCC 700922 / JCM 11081 / NRC-1) (Halobacterium halobium).